We begin with the raw amino-acid sequence, 362 residues long: Probable cinnamyl alcohol dehydrogenase 9 (362 aa).

Residue Cys-45 participates in Zn(2+) binding. Position 47 (Ser-47) interacts with NADP(+). Positions 67, 68, 98, 101, 104, 112, and 167 each coordinate Zn(2+). Residues Thr-171, 192-197, 215-220, Thr-255, Gly-279, and 302-304 contribute to the NADP(+) site; these read GLGGLG, STSPWK, and SMI.

It belongs to the zinc-containing alcohol dehydrogenase family. Homodimer. Zn(2+) serves as cofactor.

It carries out the reaction (E)-cinnamyl alcohol + NADP(+) = (E)-cinnamaldehyde + NADPH + H(+). The catalysed reaction is (E)-coniferol + NADP(+) = (E)-coniferaldehyde + NADPH + H(+). It catalyses the reaction (E)-sinapyl alcohol + NADP(+) = (E)-sinapaldehyde + NADPH + H(+). The enzyme catalyses (E)-4-coumaroyl alcohol + NADP(+) = (E)-4-coumaraldehyde + NADPH + H(+). It carries out the reaction (E)-caffeyl alcohol + NADP(+) = (E)-caffeyl aldehyde + NADPH + H(+). Its pathway is aromatic compound metabolism; phenylpropanoid biosynthesis. Involved in lignin biosynthesis. Catalyzes the final step specific for the production of lignin monomers. Catalyzes the NADPH-dependent reduction of coniferaldehyde, 5-hydroxyconiferaldehyde, sinapaldehyde, 4-coumaraldehyde and caffeyl aldehyde to their respective alcohols. The protein is Probable cinnamyl alcohol dehydrogenase 9 of Oryza sativa subsp. japonica (Rice).